The primary structure comprises 222 residues: Collectrin (222 aa).

A signal peptide spans 1–14 (MLWALFFLVTTIHA). The Extracellular portion of the chain corresponds to 15–141 (ELCHPDAENA…LAPPMEPSVP (127 aa)). Positions 21–222 (AENAFKVRLS…LTEDERLTPL (202 aa)) constitute a Collectrin-like domain. Residues Asn-76 and Asn-93 are each glycosylated (N-linked (GlcNAc...) asparagine). The helical transmembrane segment at 142-162 (VWIIVFGVIFCIVTVAIALLV) threads the bilayer. Residues 163 to 222 (LSGIRQRRRNNKGPPGVEDAEDKCENIITIENGIPCDPLDMKGGHINDGFLTEDERLTPL) lie on the Cytoplasmic side of the membrane. 2 positions are modified to phosphothreonine: Thr-214 and Thr-220.

Belongs to the CLTRN family. Monomer. Homodimer. Homodimer; dimerization prevents CLTRN cleavage by BACE2. Interacts with SNAPIN. Interacts with SLC6A18; this interaction regulates the trafficking of SLC6A18 to the cell membrane and its amino acid transporter activity. Interacts with SLC6A19; this interaction regulates the trafficking of SLC6A19 to the cell membrane and its amino acid transporter activity. Interacts with SLC6A20B. Post-translationally, glycosylated. Glycosylation is required for plasma membrane localization and for its cleavage by BACE2. Proteolytically processed in pancreatic beta cells by BACE2 leading to the generation and extracellular release of soluble CLTRN, and a corresponding cell-associated C-terminal fragment which is later cleaved by gamma-secretase. This shedding process inactivates CLTRN. Three cleavage sites have been identified for BACE2, two clustered sites after Phe-116 and Leu-118 and a more membrane proximal site at Phe-125; the preferred BACE2 cleavage site seems to be between Phe-125 and Leu-126, Phe-116 and Leu-118 act as alternative sites. Expressed on the apical surface of the proximal tubules in the renal cortex (at protein level). Kidney; collecting ducts and proximal tubule. Pancreas; beta cells of islets. Expressed in the cerebral cortex, hippocampus, brainstem and cerebellum.

The protein localises to the cell membrane. Its function is as follows. Plays an important role in amino acid transport by acting as binding partner of amino acid transporters SLC6A18 and SLC6A19, regulating their trafficking on the cell surface and their activity. May also play a role in trafficking of amino acid transporters SLC3A1 and SLC7A9 to the renal cortical cell membrane. Regulator of SNARE complex function. Stimulator of beta cell replication. The protein is Collectrin of Mus musculus (Mouse).